The chain runs to 67 residues: Large ribosomal subunit protein bL35 (67 aa).

Basic residues predominate over residues 1–16 (MPKMKTKSSAKKRFRV). Positions 1 to 24 (MPKMKTKSSAKKRFRVRPGGTVKR) are disordered.

Belongs to the bacterial ribosomal protein bL35 family.

This is Large ribosomal subunit protein bL35 from Verminephrobacter eiseniae (strain EF01-2).